The sequence spans 282 residues: Stage 0 sporulation protein J (282 aa).

A DNA-binding region (H-T-H motif) is located at residues 139–158; sequence EQLAKRLGKSRPHIANHLRL.

Belongs to the ParB family.

It is found in the cytoplasm. The protein resides in the nucleoid. Its function is as follows. Required for the initiation of sporulation and for normal chromosome segregation. Antagonizes sporulation inhibition by Soj. It probably interacts with a specific DNA site and other proteins involved in partitioning and cell division, and antagonizes Soj in response to cell cycle events related to chromosome partitioning. This Bacillus subtilis (strain 168) protein is Stage 0 sporulation protein J.